Reading from the N-terminus, the 323-residue chain is SPbeta prophage-derived uncharacterized protein YorG (323 aa).

Residues 222–272 (TAENLEKAIIEAVERQEQAEGIVAVTYEEQKQNNASEELDFNSLMDQIKEI) adopt a coiled-coil conformation.

The chain is SPbeta prophage-derived uncharacterized protein YorG (yorG) from Bacillus subtilis (strain 168).